A 146-amino-acid polypeptide reads, in one-letter code: UPF0260 protein SO_2573 (146 aa).

The protein belongs to the UPF0260 family.

This is UPF0260 protein SO_2573 from Shewanella oneidensis (strain ATCC 700550 / JCM 31522 / CIP 106686 / LMG 19005 / NCIMB 14063 / MR-1).